A 471-amino-acid polypeptide reads, in one-letter code: G2/mitotic-specific cyclin-1 (471 aa).

Belongs to the cyclin family. Cyclin AB subfamily.

In terms of biological role, essential for the control of the cell cycle at the G2/M (mitosis) transition. Interacts with the CDC2 protein kinase to form MPF. G2/M cyclins accumulate steadily during G2 and are abruptly destroyed at mitosis. The chain is G2/mitotic-specific cyclin-1 (CLB1) from Saccharomyces cerevisiae (strain ATCC 204508 / S288c) (Baker's yeast).